A 496-amino-acid polypeptide reads, in one-letter code: Guanosine-5'-triphosphate,3'-diphosphate pyrophosphatase (496 aa).

It belongs to the GppA/Ppx family. GppA subfamily.

The enzyme catalyses guanosine 3'-diphosphate 5'-triphosphate + H2O = guanosine 3',5'-bis(diphosphate) + phosphate + H(+). It functions in the pathway purine metabolism; ppGpp biosynthesis; ppGpp from GTP: step 2/2. In terms of biological role, catalyzes the conversion of pppGpp to ppGpp. Guanosine pentaphosphate (pppGpp) is a cytoplasmic signaling molecule which together with ppGpp controls the 'stringent response', an adaptive process that allows bacteria to respond to amino acid starvation, resulting in the coordinated regulation of numerous cellular activities. The protein is Guanosine-5'-triphosphate,3'-diphosphate pyrophosphatase of Aeromonas salmonicida (strain A449).